Reading from the N-terminus, the 491-residue chain is Lysine--tRNA ligase 1 (491 aa).

The Mg(2+) site is built by E400 and E407.

This sequence belongs to the class-II aminoacyl-tRNA synthetase family. In terms of assembly, homodimer. Mg(2+) serves as cofactor.

The protein resides in the cytoplasm. The enzyme catalyses tRNA(Lys) + L-lysine + ATP = L-lysyl-tRNA(Lys) + AMP + diphosphate. In Mycoplasmopsis pulmonis (strain UAB CTIP) (Mycoplasma pulmonis), this protein is Lysine--tRNA ligase 1.